The chain runs to 247 residues: Myeloid leukemia factor 2 (247 aa).

The tract at residues 122–247 (ETSEMRSAPG…PSRQSRRYDW (126 aa)) is disordered. Residues 134–144 (RETRRTVRDSD) are compositionally biased toward basic and acidic residues. Residues 154–169 (HHIRDRAHILQRSRNH) show a composition bias toward basic residues. The segment covering 170–179 (RTGDQEERQD) has biased composition (basic and acidic residues). Positions 182–192 (NLDESEAAAFD) are enriched in acidic residues. Residues 193–225 (DEWRRETSRYRQQRPLEFRRHEASVGGGRRAEG) are compositionally biased toward basic and acidic residues. 3 positions are modified to phosphoserine: serine 216, serine 237, and serine 239.

This sequence belongs to the MLF family.

It localises to the cytoplasm. It is found in the nucleus. In Mus musculus (Mouse), this protein is Myeloid leukemia factor 2 (Mlf2).